Here is a 364-residue protein sequence, read N- to C-terminus: Fructose-bisphosphate aldolase B (364 aa).

The substrate site is built by Arg56 and Lys147. Residue Glu188 is the Proton acceptor of the active site. Catalysis depends on Lys230, which acts as the Schiff-base intermediate with dihydroxyacetone-P.

The protein belongs to the class I fructose-bisphosphate aldolase family. As to quaternary structure, homotetramer.

The protein localises to the cytoplasm. Its subcellular location is the cytoskeleton. The protein resides in the microtubule organizing center. It localises to the centrosome. It is found in the centriolar satellite. It carries out the reaction beta-D-fructose 1,6-bisphosphate = D-glyceraldehyde 3-phosphate + dihydroxyacetone phosphate. The protein operates within carbohydrate degradation; glycolysis; D-glyceraldehyde 3-phosphate and glycerone phosphate from D-glucose: step 4/4. The sequence is that of Fructose-bisphosphate aldolase B (aldob) from Sparus aurata (Gilthead sea bream).